The chain runs to 298 residues: Cyanophycinase (298 aa).

Active-site charge relay system residues include Ser155, Glu173, and His197.

Belongs to the peptidase S51 family.

It carries out the reaction [L-4-(L-arginin-2-N-yl)aspartate](n) + H2O = [L-4-(L-arginin-2-N-yl)aspartate](n-1) + L-4-(L-arginin-2-N-yl)aspartate. Functionally, exopeptidase that catalyzes the hydrolytic cleavage of multi-L-arginyl-poly-L-aspartic acid (cyanophycin; a water-insoluble reserve polymer) into aspartate-arginine dipeptides. This chain is Cyanophycinase (cphB), found in Nostoc sp. (strain PCC 7120 / SAG 25.82 / UTEX 2576).